Consider the following 329-residue polypeptide: GTPase Obg (329 aa).

The Obg domain maps to 1–159 (MQFIDEAKIF…MWVWLHLKLL (159 aa)). The OBG-type G domain occupies 160-327 (SDVGLVGLPN…LLANILSELQ (168 aa)). GTP contacts are provided by residues 166–173 (GLPNAGKS), 191–195 (FTTLT), 212–215 (DIPG), 279–282 (TKTD), and 308–310 (SSY). Mg(2+) contacts are provided by serine 173 and threonine 193.

It belongs to the TRAFAC class OBG-HflX-like GTPase superfamily. OBG GTPase family. In terms of assembly, monomer. Mg(2+) serves as cofactor.

It is found in the cytoplasm. Its function is as follows. An essential GTPase which binds GTP, GDP and possibly (p)ppGpp with moderate affinity, with high nucleotide exchange rates and a fairly low GTP hydrolysis rate. Plays a role in control of the cell cycle, stress response, ribosome biogenesis and in those bacteria that undergo differentiation, in morphogenesis control. This Orientia tsutsugamushi (strain Ikeda) (Rickettsia tsutsugamushi) protein is GTPase Obg.